A 134-amino-acid chain; its full sequence is ATP synthase epsilon chain (134 aa).

The segment covering 94 to 104 (AKLAKSRAESH) has biased composition (basic and acidic residues). The interval 94-115 (AKLAKSRAESHLEEDDDNTDIN) is disordered.

It belongs to the ATPase epsilon chain family. In terms of assembly, F-type ATPases have 2 components, CF(1) - the catalytic core - and CF(0) - the membrane proton channel. CF(1) has five subunits: alpha(3), beta(3), gamma(1), delta(1), epsilon(1). CF(0) has three main subunits: a, b and c.

It localises to the cell membrane. Its function is as follows. Produces ATP from ADP in the presence of a proton gradient across the membrane. This Staphylococcus epidermidis (strain ATCC 35984 / DSM 28319 / BCRC 17069 / CCUG 31568 / BM 3577 / RP62A) protein is ATP synthase epsilon chain.